The chain runs to 142 residues: NTF2-related export protein 2 (142 aa).

The 120-residue stretch at 17–136 folds into the NTF2 domain; sequence AAEEFVNIYY…WKIASDCFRF (120 aa).

In terms of assembly, associates with NXF1, NXF2, NXF3 and NXF5.

It localises to the nucleus. The protein resides in the cytoplasm. Functionally, regulator of protein export for NES-containing proteins. Also plays a role in mRNA nuclear export. The chain is NTF2-related export protein 2 from Homo sapiens (Human).